The chain runs to 336 residues: 4-hydroxythreonine-4-phosphate dehydrogenase (336 aa).

Substrate-binding residues include histidine 142 and threonine 143. Positions 172, 217, and 274 each coordinate a divalent metal cation. The substrate site is built by lysine 282, asparagine 291, and arginine 300.

Belongs to the PdxA family. Homodimer. It depends on Zn(2+) as a cofactor. The cofactor is Mg(2+). Requires Co(2+) as cofactor.

The protein localises to the cytoplasm. It catalyses the reaction 4-(phosphooxy)-L-threonine + NAD(+) = 3-amino-2-oxopropyl phosphate + CO2 + NADH. Its pathway is cofactor biosynthesis; pyridoxine 5'-phosphate biosynthesis; pyridoxine 5'-phosphate from D-erythrose 4-phosphate: step 4/5. Catalyzes the NAD(P)-dependent oxidation of 4-(phosphooxy)-L-threonine (HTP) into 2-amino-3-oxo-4-(phosphooxy)butyric acid which spontaneously decarboxylates to form 3-amino-2-oxopropyl phosphate (AHAP). The polypeptide is 4-hydroxythreonine-4-phosphate dehydrogenase (Trichlorobacter lovleyi (strain ATCC BAA-1151 / DSM 17278 / SZ) (Geobacter lovleyi)).